Reading from the N-terminus, the 157-residue chain is Protein-export protein SecB (157 aa).

It belongs to the SecB family. As to quaternary structure, homotetramer, a dimer of dimers. One homotetramer interacts with 1 SecA dimer.

The protein localises to the cytoplasm. In terms of biological role, one of the proteins required for the normal export of preproteins out of the cell cytoplasm. It is a molecular chaperone that binds to a subset of precursor proteins, maintaining them in a translocation-competent state. It also specifically binds to its receptor SecA. The protein is Protein-export protein SecB of Magnetococcus marinus (strain ATCC BAA-1437 / JCM 17883 / MC-1).